A 416-amino-acid chain; its full sequence is UDP-N-acetylmuramoylalanine--D-glutamate ligase (416 aa).

Residue G108–T114 participates in ATP binding.

Belongs to the MurCDEF family.

The protein localises to the cytoplasm. The enzyme catalyses UDP-N-acetyl-alpha-D-muramoyl-L-alanine + D-glutamate + ATP = UDP-N-acetyl-alpha-D-muramoyl-L-alanyl-D-glutamate + ADP + phosphate + H(+). The protein operates within cell wall biogenesis; peptidoglycan biosynthesis. Cell wall formation. Catalyzes the addition of glutamate to the nucleotide precursor UDP-N-acetylmuramoyl-L-alanine (UMA). The chain is UDP-N-acetylmuramoylalanine--D-glutamate ligase from Chlamydia muridarum (strain MoPn / Nigg).